The primary structure comprises 187 residues: UPF0669 protein C6orf120 homolog (187 aa).

A signal peptide spans 1-23; the sequence is MVEYWKRNFFMVLVLQAFYLANC. A glycan (N-linked (GlcNAc...) asparagine) is linked at Asn47.

This sequence belongs to the UPF0669 family.

The protein localises to the secreted. In Xenopus tropicalis (Western clawed frog), this protein is UPF0669 protein C6orf120 homolog.